Here is a 316-residue protein sequence, read N- to C-terminus: F-box protein At4g09920 (316 aa).

Positions 1-47 constitute an F-box domain; the sequence is MDRIIGLPDEVLVKILSFVPTKVAVSTSILSKRWEFLWMWLTKLKFG.

This chain is F-box protein At4g09920, found in Arabidopsis thaliana (Mouse-ear cress).